A 258-amino-acid chain; its full sequence is Imidazole glycerol phosphate synthase subunit HisF (258 aa).

Residues D11 and D130 contribute to the active site.

It belongs to the HisA/HisF family. Heterodimer of HisH and HisF.

It is found in the cytoplasm. It catalyses the reaction 5-[(5-phospho-1-deoxy-D-ribulos-1-ylimino)methylamino]-1-(5-phospho-beta-D-ribosyl)imidazole-4-carboxamide + L-glutamine = D-erythro-1-(imidazol-4-yl)glycerol 3-phosphate + 5-amino-1-(5-phospho-beta-D-ribosyl)imidazole-4-carboxamide + L-glutamate + H(+). It participates in amino-acid biosynthesis; L-histidine biosynthesis; L-histidine from 5-phospho-alpha-D-ribose 1-diphosphate: step 5/9. In terms of biological role, IGPS catalyzes the conversion of PRFAR and glutamine to IGP, AICAR and glutamate. The HisF subunit catalyzes the cyclization activity that produces IGP and AICAR from PRFAR using the ammonia provided by the HisH subunit. In Escherichia coli O17:K52:H18 (strain UMN026 / ExPEC), this protein is Imidazole glycerol phosphate synthase subunit HisF.